We begin with the raw amino-acid sequence, 196 residues long: Peptidyl-tRNA hydrolase (196 aa).

A tRNA-binding site is contributed by His15. His20 serves as the catalytic Proton acceptor. The tRNA site is built by Tyr66, Asn68, and Asn114.

Belongs to the PTH family. In terms of assembly, monomer.

The protein resides in the cytoplasm. The catalysed reaction is an N-acyl-L-alpha-aminoacyl-tRNA + H2O = an N-acyl-L-amino acid + a tRNA + H(+). Functionally, hydrolyzes ribosome-free peptidyl-tRNAs (with 1 or more amino acids incorporated), which drop off the ribosome during protein synthesis, or as a result of ribosome stalling. Its function is as follows. Catalyzes the release of premature peptidyl moieties from peptidyl-tRNA molecules trapped in stalled 50S ribosomal subunits, and thus maintains levels of free tRNAs and 50S ribosomes. The protein is Peptidyl-tRNA hydrolase of Polynucleobacter asymbioticus (strain DSM 18221 / CIP 109841 / QLW-P1DMWA-1) (Polynucleobacter necessarius subsp. asymbioticus).